Here is a 1460-residue protein sequence, read N- to C-terminus: MGRYSVSPVPKCLLLMFLGWSGLKYYQVNAAQLREYRIAAQLEDWDYNPQPEELSRLSESELTFKKIVYREYELDFKQEKPRDELSGLLGPTLRGEVGDILIIYFKNFATQPVSIHPQSAVYNKWSEGSSYSDGTSDVERLDDAVPPGQSFKYVWNITAEIGPKKADPPCLTYAYYSHVNMVRDFNSGLIGALLICKEGSLNANGAQKFFNREYVLMFSVFDESKNWYRKPSLQYTINGFANGTLPDVQACAYDHISWHLIGMSSSPEIFSVHFNGQTLEQNHYKVSTINLVGGASVTANMSVSRTGKWLISSLVAKHLQAGMYGYLNIKDCGHPNTLTRKLSFRELRRIMNWEYFIAAEEITWDYAPEIPSSVDRRYKAQYLDNFSNFIGKKYKKAVFRQYEDGNFTKPTYAIWPKERGILGPVIKAKVRDTVTIVFKNLASRPYSIYVHGVSVSKDAEGAIYPSDPKENITHGKAVEPGQVYTYKWTVLDTDEPTVKDSECITKLYHSAVDMTRDIASGLIGPLLVCKLKALSVKGVQNKADVEQHAVFAVFDENKSWYLEDNIKKYCSNPSSVKKDDPKFYKSNVMYTLNGYASDRTEVLGFHQSEVVQWHLTSVGTVDEIVPVHLSGHTFLSKGKHQDILNLFPMSGESATVTMDNLGTWLLSSWGSCEMSNGMRLRFLDANYDDEDEGNEEEEEDDGDIFADIFSPPEVVKKKEEVPVNFVPDPESDALAKELGLLDDEDNPEQSRSEQTEDDEEQLMIASVLGLRSFKGSVAEEELKHTALALEEDAHASDPRIDSNSARNSDDIAGRYLRTINRRNKRRYYIAAEEVLWDYSPIGKSQVRSLPAKTTFKKAIFRSYLDDTFQTPSTGGEYEKHLGILGPIIRAEVDDVIEVQFRNLASRPYSLHAHGLLYEKSSEGRSYDDNSPELFKKDDAIMPNGTYTYVWQVPPRSGPTDNTEKCKSWAYYSGVNPEKDIHSGLIGPILICQKGMIDKYNRTIDIREFVLFFMVFDEEKSWYFPKSDKSTCEEKLIGVQSSHHTFPAINGIPYQLQGLMMYKDENVHWHLLNMGGPKDIHVVNFHGQTFTEEGREDNQLGVLPLLPGTFASIKMKPSKIGTWLLETEVGENQERGMQALFTVIDKDCKLPMGLASGIIQDSQISASGHVEYWEPKLARLNNTGMFNAWSIIKKEHEHPWIQIDLQRQVVITGIQTQGTVQLLKHSYTVEYFVTYSKDGQNWITFKGRHSETQMHFEGNSDGTTVKENHIDPPIIARYIRLHPTKFYNTPTFRIELLGCEVEGCSVPLGMESGAIKNSEITASSYKKTWWSSWEPFLARLNLEGGTNAWQPEVNNKDQWLQIDLQHLTKITSIITQGATSMTTAMYVKTFSIHYTDDNSTWKPYLDVRTSMEKVFTGNINSDGHVKHFFKPPILSRFIRIIPKTWNQYIALRIELFGCEVF.

Positions 1–30 are cleaved as a signal peptide; the sequence is MGRYSVSPVPKCLLLMFLGWSGLKYYQVNA. 4 Plastocyanin-like domains span residues 32–196, 206–330, 351–529, and 539–685; these read QLRE…LLIC, AQKF…LNIK, MNWE…LLVC, and VQNK…FLDA. F5/8 type A domains lie at 32 to 330 and 350 to 685; these read QLRE…LNIK and IMNW…FLDA. The Ca(2+) site is built by lysine 124, glutamate 139, aspartate 142, and aspartate 143. N-linked (GlcNAc...) asparagine glycosylation occurs at asparagine 156. A disulfide bridge links cysteine 170 with cysteine 196. Residues asparagine 242, asparagine 300, asparagine 385, asparagine 406, and asparagine 471 are each glycosylated (N-linked (GlcNAc...) asparagine). A disulfide bridge connects residues cysteine 251 and cysteine 332. Cysteine 503 and cysteine 529 are oxidised to a cystine. A glycan (N-linked (GlcNAc...) asparagine) is linked at asparagine 557. Disulfide bonds link cysteine 672–cysteine 1031, cysteine 965–cysteine 991, cysteine 1147–cysteine 1298, and cysteine 1303–cysteine 1457. The segment at 693–817 is b; sequence GNEEEEEDDG…SDDIAGRYLR (125 aa). Residues 740 to 760 form a disordered region; that stretch reads LLDDEDNPEQSRSEQTEDDEE. Positions 772-817 are cleaved as a propeptide — activation peptide (connecting region); the sequence is SFKGSVAEEELKHTALALEEDAHASDPRIDSNSARNSDDIAGRYLR. Plastocyanin-like domains lie at 823–991 and 1000–1143; these read NKRR…ILIC and NRTI…FTVI. In terms of domain architecture, F5/8 type A 3 spans 823–1143; sequence NKRRYYIAAE…RGMQALFTVI (321 aa). Ca(2+) is bound by residues lysine 919, phenylalanine 934, aspartate 937, and aspartate 938. The N-linked (GlcNAc...) asparagine glycan is linked to asparagine 943. Residues asparagine 1000, asparagine 1180, and asparagine 1397 are each glycosylated (N-linked (GlcNAc...) asparagine). F5/8 type C domains lie at 1147 to 1298 and 1303 to 1457; these read CKLP…LLGC and CSVP…LFGC.

The protein belongs to the multicopper oxidase family. In terms of assembly, heterodimer of a light and a heavy chains; non-disulfide-linked. The interaction between the two chains is calcium-dependent. Found in its active form associated with omicarin-C catalytic subunit (AC Q58L95). In terms of processing, in physiological conditions, blood coagulation factor V and factor Va are inactivated by activated protein C (APC) through proteolytic degradation of the heavy chain. However, omicarin-C non-catalytic subunit (factor V-like protein) retains its full activity even at high concentration of APC. This has two explanations: this protein has only one of the three cleavage sites present in factor V that are targeted by the APC for inactivation, and the binding with the catalytic subunit protect the cleavage site from inactivation. In terms of tissue distribution, expressed by the venom gland.

The protein resides in the secreted. Functionally, snake prothrombin activator that attacks the hemostatic system of prey. This non-catalytic subunit is functionally similar to blood coagulation factor V. It serves as a critical cofactor for the prothrombinase activity of the catalytic subunit, which is similar to the blood coagulation factor X. The complex converts prothrombin to thrombin by sequential cleavage at two positions, Arg-320 followed by Arg-271. Cleavage at Arg-320 produces an active intermediate known as meizothrombin. Meizothrombin is the 'second' substrate for prothrombinase, and it docks in an altered manner to present the second cleavage site (271). Cleavage at Arg-271 releases active thrombin from its pro-fragment. This order of events is reversed if the protease component of prothrombinase is used on its own, suggesting that the 271 site is inherently more accessible to proteolysis. The sequence is that of Venom prothrombin activator omicarin-C non-catalytic subunit from Oxyuranus microlepidotus (Inland taipan).